Consider the following 146-residue polypeptide: uncharacterized protein (146 aa).

A helical membrane pass occupies residues 7 to 27 (FVLSITIVLVILIIIAFIWYN).

The protein belongs to the asfivirus E146L family.

Its subcellular location is the host membrane. The protein localises to the virion. This is an uncharacterized protein from African swine fever virus (strain Badajoz 1971 Vero-adapted) (Ba71V).